Consider the following 694-residue polypeptide: DNA-directed RNA polymerase subunit beta' (694 aa).

Residues C69, C71, C87, and C90 each coordinate Zn(2+). Positions 489, 491, and 493 each coordinate Mg(2+).

It belongs to the RNA polymerase beta' chain family. RpoC1 subfamily. As to quaternary structure, in plastids the minimal PEP RNA polymerase catalytic core is composed of four subunits: alpha, beta, beta', and beta''. When a (nuclear-encoded) sigma factor is associated with the core the holoenzyme is formed, which can initiate transcription. Requires Mg(2+) as cofactor. The cofactor is Zn(2+).

The protein localises to the plastid. It localises to the chloroplast. The catalysed reaction is RNA(n) + a ribonucleoside 5'-triphosphate = RNA(n+1) + diphosphate. DNA-dependent RNA polymerase catalyzes the transcription of DNA into RNA using the four ribonucleoside triphosphates as substrates. This is DNA-directed RNA polymerase subunit beta' from Gossypium barbadense (Sea Island cotton).